We begin with the raw amino-acid sequence, 786 residues long: E3 ubiquitin-protein ligase UHRF1 (786 aa).

A Ubiquitin-like domain is found at 1 to 78 (MWIQVRTMDG…IQLLVRQSLV (78 aa)). 3 positions are modified to phosphoserine: serine 76, serine 98, and serine 102. The segment at 82–134 (PVPSSSGGSKERDSELSDTDSGCGLAQSESDKSSNSGEAANEPEGKADEDECD) is disordered. Tudor-like stretches follow at residues 139–213 (GLYK…ARAR) and 220–287 (DLQV…IERP). A Glycyl lysine isopeptide (Lys-Gly) (interchain with G-Cter in SUMO2) cross-link involves residue lysine 283. A linker region spans residues 300–305 (RKSGPS). Residue serine 302 is modified to Phosphoserine; by PKA. The PHD-type zinc-finger motif lies at 303–370 (GPSCKHCKDD…EWYCPDCRID (68 aa)). 2 histone H3R2me0 binding regions span residues 337–341 (CDECD) and 357–359 (PPE). Serine 372 carries the post-translational modification Phosphoserine. A Glycyl lysine isopeptide (Lys-Gly) (interchain with G-Cter in SUMO2) cross-link involves residue lysine 389. N6-acetyllysine is present on lysine 403. In terms of domain architecture, YDG spans 423–586 (GPIPGIPVGT…FLVWRFLLRR (164 aa)). The tract at residues 449–450 (HV) is required to promote base flipping. DNA is bound by residues 467-468 (AG) and aspartate 473. Required for formation of a 5-methylcytosine-binding pocket stretches follow at residues 470–473 (YEDD) and 482–485 (YTGS). N6-acetyllysine; alternate is present on lysine 550. Lysine 550 participates in a covalent cross-link: Glycyl lysine isopeptide (Lys-Gly) (interchain with G-Cter in SUMO2); alternate. A disordered region spans residues 626–679 (NSKQAALDKEEEDGEEGFTSPRKGKRKSKSAGGDGSSRGTPKKTKVEPYSLTTQ). Phosphoserine; by CDK1 is present on serine 645. Phosphoserine is present on residues serine 655 and serine 662. Residue lysine 670 forms a Glycyl lysine isopeptide (Lys-Gly) (interchain with G-Cter in SUMO2) linkage. The RING-type zinc-finger motif lies at 717–756 (CICCQELVFRPITTVCQHNVCKDCLDRSFKAQVFSCPACR).

As to quaternary structure, interacts with DNMT3A and DNMT3B. Interacts with DNMT1; the interaction is direct. Interacts with USP7; leading to its deubiquitination. Interacts with histone H3. Interacts with HDAC1, but not with HDAC2. Interacts with BLTP3A. Interacts with PML. Interacts with EHMT2. Binds methylated CpG containing oligonucleotides. Interacts with ZNF263; recruited to the SIX3 promoter along with other proteins involved in chromatin modification and transcriptional corepression where it contributes to transcriptional repression. Interacts with UHRF2. Interacts with FANCD2. Interacts with TET1 isoform 2; this interaction induces the recruitment of TET1 isoform 2 to replicating heterochromatin. In terms of processing, phosphorylation at Ser-302 of the linker region decreases the binding to H3K9me3. Phosphorylation at Ser-645 by CDK1 during M phase impairs interaction with USP7, preventing deubiquitination and leading to degradation by the proteasome. Ubiquitinated; which leads to proteasomal degradation. Autoubiquitinated; interaction with USP7 leads to deubiquitination and prevents degradation. Ubiquitination and degradation takes place during M phase, when phosphorylation at Ser-645 prevents interaction with USP7 and subsequent deubiquitination. Polyubiquitination may be stimulated by DNA damage.

The protein resides in the nucleus. It catalyses the reaction S-ubiquitinyl-[E2 ubiquitin-conjugating enzyme]-L-cysteine + [acceptor protein]-L-lysine = [E2 ubiquitin-conjugating enzyme]-L-cysteine + N(6)-ubiquitinyl-[acceptor protein]-L-lysine.. It participates in protein modification; protein ubiquitination. Its function is as follows. Multidomain protein that acts as a key epigenetic regulator by bridging DNA methylation and chromatin modification. Specifically recognizes and binds hemimethylated DNA at replication forks via its YDG domain and recruits DNMT1 methyltransferase to ensure faithful propagation of the DNA methylation patterns through DNA replication. In addition to its role in maintenance of DNA methylation, also plays a key role in chromatin modification: through its tudor-like regions and PHD-type zinc fingers, specifically recognizes and binds histone H3 trimethylated at 'Lys-9' (H3K9me3) and unmethylated at 'Arg-2' (H3R2me0), respectively, and recruits chromatin proteins. Enriched in pericentric heterochromatin where it recruits different chromatin modifiers required for this chromatin replication. Also localizes to euchromatic regions where it negatively regulates transcription possibly by impacting DNA methylation and histone modifications. Has E3 ubiquitin-protein ligase activity by mediating the ubiquitination of target proteins such as histone H3 and PML. It is still unclear how E3 ubiquitin-protein ligase activity is related to its role in chromatin in vivo. Plays a role in DNA repair by cooperating with UHRF2 to ensure recruitment of FANCD2 to interstrand cross-links (ICLs) leading to FANCD2 activation. Plays a pivotal role in the establishment of correct spindle architecture by catalyzing the 'Lys-63'-linked ubiquitination of KIF11, thereby controlling KIF11 localization on the spindle. This chain is E3 ubiquitin-protein ligase UHRF1 (UHRF1), found in Bos taurus (Bovine).